Here is a 272-residue protein sequence, read N- to C-terminus: Undecaprenyl-diphosphatase (272 aa).

Transmembrane regions (helical) follow at residues 1–21 (MSTL…FLPI), 39–59 (QGLA…MMYF), 91–111 (WWIL…KDFI), 117–137 (SALV…FADI), 151–171 (LGLK…IPGT), 196–216 (FLLS…KLIL), 228–248 (LGSL…LILL), and 251–271 (LGMM…LWFI).

This sequence belongs to the UppP family.

The protein resides in the cell inner membrane. The catalysed reaction is di-trans,octa-cis-undecaprenyl diphosphate + H2O = di-trans,octa-cis-undecaprenyl phosphate + phosphate + H(+). Its function is as follows. Catalyzes the dephosphorylation of undecaprenyl diphosphate (UPP). Confers resistance to bacitracin. The polypeptide is Undecaprenyl-diphosphatase (Colwellia psychrerythraea (strain 34H / ATCC BAA-681) (Vibrio psychroerythus)).